The following is a 394-amino-acid chain: Elongation factor Tu 1 (394 aa).

One can recognise a tr-type G domain in the interval 9–204 (KPHCNIGTIG…AIDDYIPQPT (196 aa)). Positions 18–25 (GHVDHGKT) are G1. GTP is bound at residue 18-25 (GHVDHGKT). Thr-25 serves as a coordination point for Mg(2+). A G2 region spans residues 61–65 (GITIQ). Residues 82–85 (DCPG) are G3. GTP is bound by residues 82 to 86 (DCPGH) and 137 to 140 (NKID). The tract at residues 137 to 140 (NKID) is G4. The G5 stretch occupies residues 174 to 176 (SAL).

It belongs to the TRAFAC class translation factor GTPase superfamily. Classic translation factor GTPase family. EF-Tu/EF-1A subfamily. As to quaternary structure, monomer.

The protein localises to the cytoplasm. It catalyses the reaction GTP + H2O = GDP + phosphate + H(+). Its function is as follows. GTP hydrolase that promotes the GTP-dependent binding of aminoacyl-tRNA to the A-site of ribosomes during protein biosynthesis. This chain is Elongation factor Tu 1, found in Orientia tsutsugamushi (strain Boryong) (Rickettsia tsutsugamushi).